The primary structure comprises 622 residues: Polypeptide N-acetylgalactosaminyltransferase 6 (622 aa).

At 1 to 8 the chain is on the cytoplasmic side; it reads MRLLRRRH. Residues 9-28 form a helical; Signal-anchor for type II membrane protein membrane-spanning segment; that stretch reads MAVRLVMVGSAFVLFLFILQ. Residues 29-622 lie on the Lumenal side of the membrane; it reads RDVSGREQAT…SDPHQHWLFI (594 aa). Asn-86 is a glycosylation site (N-linked (GlcNAc...) asparagine). Residues 103-135 are disordered; the sequence is WERPPQDPNGPGADGKAFQKKEWTPQETQEKEE. Over residues 119-135 the composition is skewed to basic and acidic residues; sequence AFQKKEWTPQETQEKEE. The tract at residues 176-285 is catalytic subdomain A; that stretch reads LPATSVIIVF…HGWLEPLLAR (110 aa). The Mn(2+) site is built by Asp-269, His-271, and His-407. A catalytic subdomain B region spans residues 348–410; that stretch reads PIKSPTFAGG…PCSVVGHVFR (63 aa). N-linked (GlcNAc...) asparagine glycosylation is present at Asn-476. The Ricin B-type lectin domain maps to 507–622; sequence DHCLDVGENN…SDPHQHWLFI (116 aa). Cys-509 and Cys-527 are joined by a disulfide. 4 residues coordinate UDP-N-acetyl-alpha-D-galactosamine: Asp-511, Glu-514, His-528, and Asn-533. 2 disulfide bridges follow: Cys-553–Cys-566 and Cys-597–Cys-610.

This sequence belongs to the glycosyltransferase 2 family. GalNAc-T subfamily. Mn(2+) is required as a cofactor.

The protein resides in the golgi apparatus membrane. The catalysed reaction is L-seryl-[protein] + UDP-N-acetyl-alpha-D-galactosamine = a 3-O-[N-acetyl-alpha-D-galactosaminyl]-L-seryl-[protein] + UDP + H(+). The enzyme catalyses L-threonyl-[protein] + UDP-N-acetyl-alpha-D-galactosamine = a 3-O-[N-acetyl-alpha-D-galactosaminyl]-L-threonyl-[protein] + UDP + H(+). It participates in protein modification; protein glycosylation. Its function is as follows. Catalyzes the initial reaction in O-linked oligosaccharide biosynthesis, the transfer of an N-acetyl-D-galactosamine residue to a serine or threonine residue on the protein receptor. May participate in synthesis of oncofetal fibronectin. Has activity toward MUC1A, MUC2, EA2 and fibronectin peptides. The chain is Polypeptide N-acetylgalactosaminyltransferase 6 (GALNT6) from Bos taurus (Bovine).